We begin with the raw amino-acid sequence, 354 residues long: Guanine nucleotide-binding protein alpha-3 subunit (354 aa).

A lipid anchor (N-myristoyl glycine) is attached at Gly2. Cys4 is lipidated: S-palmitoyl cysteine. The G-alpha domain occupies 33–354; that stretch reads KECKILLLGS…TNALKDSGIL (322 aa). The tract at residues 36–49 is G1 motif; the sequence is KILLLGSGESGKST. Residues 41 to 48, 177 to 183, 202 to 206, 271 to 274, and Ala326 contribute to the GTP site; these read GSGESGKS, LRARSKT, DVGGQ, and NKID. Residues Ser48 and Thr183 each coordinate Mg(2+). The G2 motif stretch occupies residues 175–183; it reads DVLRARSKT. The tract at residues 198-207 is G3 motif; sequence IHLFDVGGQR. The tract at residues 267 to 274 is G4 motif; that stretch reads ILFLNKID. The segment at 324 to 329 is G5 motif; that stretch reads TQATDT.

The protein belongs to the G-alpha family. G proteins are composed of 3 units; alpha, beta and gamma. The alpha chain contains the guanine nucleotide binding site.

Functionally, guanine nucleotide-binding proteins (G proteins) are involved as modulators or transducers in various transmembrane signaling systems. This subunit is involved in cAMP regulation and morphogenesis. It is essential for dimorphic switching in haploid cells. This is Guanine nucleotide-binding protein alpha-3 subunit (FIL1) from Ustilago hordei (Barley covered smut fungus).